We begin with the raw amino-acid sequence, 430 residues long: MKTTIAQVGRYVNEQVTIGAWIANKRSSGKIAFLQLRDGTGFIQGVVVKAEVPEDVFALAKSITQESSLYVTGTVREDERSPSGYELSVEQIELIHQATDYPITPKQHGTEFLMDHRHLWLRSKRQHAIMKIRSQIIRSTYDFFSERGFTKLDSPILTGSSPEGTSELFHTKYFDEDAYLSQSGQLYAEAGAMALGRVFTFGPTFRAEKSKTRRHLIEFWMIEPEMAFVEHEESLEIQEQYVAHLAKAVLDHCQLELKQLGRDVTKLEAIKAPFPRITYDEALDLLKEKGFDDISWGDDFGSPHETAIAEHFDKPVFITRYPRSLKPFYMQPAPDRDDVVLCADLIAPEGYGEIIGGSERIHDYDLLKQELEKHNLPLDAYGWYLDLRKYGSVPHSGFGLGLERTVAWLSGTEHVRETIPFPRLLNRLYP.

This sequence belongs to the class-II aminoacyl-tRNA synthetase family. Homodimer.

The protein resides in the cytoplasm. The catalysed reaction is tRNA(Asn) + L-asparagine + ATP = L-asparaginyl-tRNA(Asn) + AMP + diphosphate + H(+). This Shouchella clausii (strain KSM-K16) (Alkalihalobacillus clausii) protein is Asparagine--tRNA ligase.